The sequence spans 426 residues: Histidine--tRNA ligase (426 aa).

Belongs to the class-II aminoacyl-tRNA synthetase family. In terms of assembly, homodimer.

It is found in the cytoplasm. The catalysed reaction is tRNA(His) + L-histidine + ATP = L-histidyl-tRNA(His) + AMP + diphosphate + H(+). This is Histidine--tRNA ligase (hisS) from Streptococcus dysgalactiae subsp. equisimilis (Streptococcus equisimilis).